Reading from the N-terminus, the 157-residue chain is Molybdopterin synthase catalytic subunit (157 aa).

Residues 103-104, lysine 119, and 126-128 each bind substrate; these read HR and KKE.

It belongs to the MoaE family. MOCS2B subfamily. Heterotetramer; composed of 2 small (MOCS2A) and 2 large (MOCS2B) subunits.

It is found in the cytoplasm. It carries out the reaction 2 [molybdopterin-synthase sulfur-carrier protein]-C-terminal-Gly-aminoethanethioate + cyclic pyranopterin phosphate + H2O = molybdopterin + 2 [molybdopterin-synthase sulfur-carrier protein]-C-terminal Gly-Gly + 2 H(+). It participates in cofactor biosynthesis; molybdopterin biosynthesis. Catalytic subunit of the molybdopterin synthase complex, a complex that catalyzes the conversion of precursor Z into molybdopterin. Acts by mediating the incorporation of 2 sulfur atoms from thiocarboxylated MOCS2A into precursor Z to generate a dithiolene group. This Culex quinquefasciatus (Southern house mosquito) protein is Molybdopterin synthase catalytic subunit.